Consider the following 1239-residue polypeptide: DNA-directed RNA polymerase subunit beta (1239 aa).

Residues 1182–1239 are disordered; the sequence is IEGAENQLEDKEEKEEEKEENYKEDSDEYDDLREEDVEPDLEELSLDDLDLDDFGDEH. Composition is skewed to acidic residues over residues 1191-1200 and 1206-1239; these read DKEEKEEEKE and DSDEYDDLREEDVEPDLEELSLDDLDLDDFGDEH.

This sequence belongs to the RNA polymerase beta chain family. The RNAP catalytic core consists of 2 alpha, 1 beta, 1 beta' and 1 omega subunit. When a sigma factor is associated with the core the holoenzyme is formed, which can initiate transcription.

The catalysed reaction is RNA(n) + a ribonucleoside 5'-triphosphate = RNA(n+1) + diphosphate. DNA-dependent RNA polymerase catalyzes the transcription of DNA into RNA using the four ribonucleoside triphosphates as substrates. The polypeptide is DNA-directed RNA polymerase subunit beta (Clostridium botulinum (strain Loch Maree / Type A3)).